The primary structure comprises 155 residues: SsrA-binding protein (155 aa).

Residues 123 to 142 (DLHDKRETEKKRDWEREKGQ) are compositionally biased toward basic and acidic residues. The tract at residues 123–155 (DLHDKRETEKKRDWEREKGQLMRHKISSPRKDT) is disordered. Residues 143–155 (LMRHKISSPRKDT) are compositionally biased toward basic residues.

Belongs to the SmpB family.

The protein resides in the cytoplasm. Its function is as follows. Required for rescue of stalled ribosomes mediated by trans-translation. Binds to transfer-messenger RNA (tmRNA), required for stable association of tmRNA with ribosomes. tmRNA and SmpB together mimic tRNA shape, replacing the anticodon stem-loop with SmpB. tmRNA is encoded by the ssrA gene; the 2 termini fold to resemble tRNA(Ala) and it encodes a 'tag peptide', a short internal open reading frame. During trans-translation Ala-aminoacylated tmRNA acts like a tRNA, entering the A-site of stalled ribosomes, displacing the stalled mRNA. The ribosome then switches to translate the ORF on the tmRNA; the nascent peptide is terminated with the 'tag peptide' encoded by the tmRNA and targeted for degradation. The ribosome is freed to recommence translation, which seems to be the essential function of trans-translation. In Methylibium petroleiphilum (strain ATCC BAA-1232 / LMG 22953 / PM1), this protein is SsrA-binding protein.